We begin with the raw amino-acid sequence, 134 residues long: Fluoride-specific ion channel FluC 2 (134 aa).

4 helical membrane-spanning segments follow: residues 10–30 (LSAE…GALL), 43–63 (LLVN…PAAP), 67–87 (LLVG…MVDA), and 100–120 (FGLI…GFWL). Residues Gly75 and Thr78 each contribute to the Na(+) site.

This sequence belongs to the fluoride channel Fluc/FEX (TC 1.A.43) family.

The protein localises to the cell inner membrane. It catalyses the reaction fluoride(in) = fluoride(out). Its activity is regulated as follows. Na(+) is not transported, but it plays an essential structural role and its presence is essential for fluoride channel function. Its function is as follows. Fluoride-specific ion channel. Important for reducing fluoride concentration in the cell, thus reducing its toxicity. The polypeptide is Fluoride-specific ion channel FluC 2 (Synechococcus sp. (strain CC9902)).